The following is a 231-amino-acid chain: Ribose-5-phosphate isomerase A (231 aa).

Residues 23–26, 80–83, and 93–96 each bind substrate; these read SGST, DGAD, and KGGG. Glutamate 102 functions as the Proton acceptor in the catalytic mechanism. Position 120 (lysine 120) interacts with substrate.

This sequence belongs to the ribose 5-phosphate isomerase family. Homodimer.

The enzyme catalyses aldehydo-D-ribose 5-phosphate = D-ribulose 5-phosphate. Its pathway is carbohydrate degradation; pentose phosphate pathway; D-ribose 5-phosphate from D-ribulose 5-phosphate (non-oxidative stage): step 1/1. Functionally, catalyzes the reversible conversion of ribose-5-phosphate to ribulose 5-phosphate. The polypeptide is Ribose-5-phosphate isomerase A (Prochlorococcus marinus subsp. pastoris (strain CCMP1986 / NIES-2087 / MED4)).